The chain runs to 858 residues: Ubiquitin carboxyl-terminal hydrolase 5 (858 aa).

At Ala2 the chain carries N-acetylalanine. Residues 73-98 (LRRTRRPKEEDTSAGTGDPPRKKPTR) form a disordered region. A Glycyl lysine isopeptide (Lys-Gly) (interchain with G-Cter in SUMO) cross-link involves residue Lys113. Phosphoserine is present on residues Ser149 and Ser156. The segment at 175–283 (QVSKHAFNLK…EHLSHFGIDM (109 aa)) adopts a UBP-type; degenerate zinc-finger fold. A disulfide bridge connects residues Cys195 and Cys816. Zn(2+)-binding residues include Cys199 and Cys202. Trp209 is a substrate binding site. A Zn(2+)-binding site is contributed by Cys219. Residue 221–224 (RRYF) participates in substrate binding. His232 contacts Zn(2+). Tyr259, Tyr261, and Asp264 together coordinate substrate. The residue at position 292 (Thr292) is a Phosphothreonine. The 531-residue stretch at 326 to 856 (TGIRNLGNSC…LGYIYFYQRV (531 aa)) folds into the USP domain. Cys335 (nucleophile) is an active-site residue. Position 623 is a phosphothreonine (Thr623). UBA domains lie at 654 to 695 (MLDE…VMSH) and 722 to 762 (PPPE…IFSH). 3 positions are modified to phosphoserine: Ser779, Ser783, and Ser785. His818 acts as the Proton acceptor in catalysis.

Belongs to the peptidase C19 family. As to quaternary structure, homodimer. Interacts with TRIML1. In terms of processing, SUMOylated at Lys-113; SUMOylation affects the interaction with Cav3.2 channels. Ubiquitinated by SMURF1; leading to proteasomal degradation.

The protein localises to the cytoplasm. It localises to the stress granule. The protein resides in the nucleus. The enzyme catalyses Thiol-dependent hydrolysis of ester, thioester, amide, peptide and isopeptide bonds formed by the C-terminal Gly of ubiquitin (a 76-residue protein attached to proteins as an intracellular targeting signal).. Deubiquitinating enzyme that participates in a wide range of cellular processes by specifically cleaving isopeptide bonds between ubiquitin and substrate proteins or ubiquitin itself. Affects thereby important cellular signaling pathways such as NF-kappa-B, Wnt/beta-catenin, and cytokine production by regulating ubiquitin-dependent protein degradation. Participates in the activation of the Wnt signaling pathway by promoting FOXM1 deubiquitination and stabilization that induces the recruitment of beta-catenin to Wnt target gene promoter. Regulates the assembly and disassembly of heat-induced stress granules by mediating the hydrolysis of unanchored ubiquitin chains. Promotes lipopolysaccharide-induced apoptosis and inflammatory response by stabilizing the TXNIP protein. Affects T-cell biology by stabilizing the inhibitory receptor on T-cells PDC1. Acts as a negative regulator of autophagy by regulating ULK1 at both protein and mRNA levels. Acts also as a negative regulator of type I interferon production by simultaneously removing both 'Lys-48'-linked unanchored and 'Lys-63'-linked anchored polyubiquitin chains on the transcription factor IRF3. Modulates the stability of DNA mismatch repair protein MLH1 and counteracts the effect of the ubiquitin ligase UBR4. Upon activation by insulin, it gets phosphorylated through mTORC1-mediated phosphorylation to enhance YTHDF1 stability by removing 'Lys-11'-linked polyubiquitination. May also deubiquitinate other substrates such as the calcium channel CACNA1H. This Mus musculus (Mouse) protein is Ubiquitin carboxyl-terminal hydrolase 5 (Usp5).